A 183-amino-acid chain; its full sequence is Large ribosomal subunit protein uL18 (183 aa).

Belongs to the universal ribosomal protein uL18 family. As to quaternary structure, part of the 50S ribosomal subunit. Contacts the 5S and 23S rRNAs.

In terms of biological role, this is one of the proteins that bind and probably mediate the attachment of the 5S RNA into the large ribosomal subunit, where it forms part of the central protuberance. This Halobacterium salinarum (strain ATCC 29341 / DSM 671 / R1) protein is Large ribosomal subunit protein uL18.